The chain runs to 120 residues: Superoxide dismutase [Cu-Zn] (120 aa).

Cu cation-binding residues include histidine 11, histidine 13, and histidine 28. The tract at residues 16–52 is disordered; that stretch reads GDTTNGCMSTGPHFNPTGKEHGAPQDENRHAGDLGNI. The cysteines at positions 22 and 112 are disulfide-linked. Residues histidine 28, histidine 36, histidine 45, and aspartate 48 each contribute to the Zn(2+) site. A compositionally biased stretch (basic and acidic residues) spans 33 to 47; it reads GKEHGAPQDENRHAG. A Cu cation-binding site is contributed by histidine 85.

This sequence belongs to the Cu-Zn superoxide dismutase family. In terms of assembly, homodimer. Requires Cu cation as cofactor. Zn(2+) serves as cofactor.

The protein resides in the cytoplasm. The enzyme catalyses 2 superoxide + 2 H(+) = H2O2 + O2. Its function is as follows. Destroys radicals which are normally produced within the cells and which are toxic to biological systems. This chain is Superoxide dismutase [Cu-Zn] (sodC), found in Aspergillus japonicus.